The following is a 466-amino-acid chain: 55 kDa erythrocyte membrane protein (466 aa).

Thr-2 is subject to N-acetylthreonine. 2 positions are modified to phosphoserine: Ser-13 and Ser-19. Thr-49 carries the phosphothreonine modification. Residues Ser-52, Ser-57, and Ser-110 each carry the phosphoserine modification. The PDZ domain maps to 71-152; the sequence is LIQIEKVTEE…MISLKVIPNQ (82 aa). The 71-residue stretch at 158-228 folds into the SH3 domain; the sequence is ALQMFMRAQF…PSPELQEWRV (71 aa). The residue at position 243 (Ser-243) is a Phosphoserine. Residues 268 to 466 are interaction with PALS1; it reads VVSYEEVVRL…PQWVPVSWVY (199 aa). In terms of domain architecture, Guanylate kinase-like spans 282 to 451; sequence RKTLVLIGAS…TLKKLQEAFD (170 aa).

The protein belongs to the MAGUK family. As to quaternary structure, heterodimer with PALS1. Interacts with DLG5 and NF2. Interacts (via guanylate kinase-like domain) with WHRN (via third PDZ domain). Post-translationally, palmitoylated.

Its subcellular location is the cell membrane. It is found in the cell projection. It localises to the stereocilium. Its function is as follows. Essential regulator of neutrophil polarity. Regulates neutrophil polarization by regulating AKT1 phosphorylation through a mechanism that is independent of PIK3CG activity. This is 55 kDa erythrocyte membrane protein (MPP1) from Papio anubis (Olive baboon).